We begin with the raw amino-acid sequence, 659 residues long: Zeaxanthin epoxidase, chloroplastic (659 aa).

The transit peptide at 1–50 (MALLSATAPAKTRFSLFSHEEAQHPHPHALSACCGGGASGKRQRARARVA) directs the protein to the chloroplast. FAD contacts are provided by residues 79–107 (RVLV…TVFE) and 357–370 (TFNW…LLGD). The FHA domain occupies 553–607 (LSIGSRSDPSNSTASLALPLPQISENHATITCKNKAFYVTDNGSEHGTWITDNEG).

FAD is required as a cofactor. Expressed in young microspores.

Its subcellular location is the plastid. It localises to the chloroplast membrane. The protein resides in the chloroplast thylakoid membrane. The catalysed reaction is all-trans-zeaxanthin + 4 reduced [2Fe-2S]-[ferredoxin] + 2 O2 + 4 H(+) = all-trans-violaxanthin + 4 oxidized [2Fe-2S]-[ferredoxin] + 2 H2O. It functions in the pathway plant hormone biosynthesis; abscisate biosynthesis. Functionally, zeaxanthin epoxidase that plays an important role in the xanthophyll cycle and abscisic acid (ABA) biosynthesis. Converts zeaxanthin into antheraxanthin and subsequently violaxanthin. Required for resistance to osmotic and drought stresses, seed development and dormancy. The chain is Zeaxanthin epoxidase, chloroplastic (ZEP) from Oryza sativa subsp. japonica (Rice).